The chain runs to 227 residues: PKHD-type hydroxylase azo0608 (227 aa).

The Fe2OG dioxygenase domain occupies 78–178 (RVLTPFFNRY…RVACFMFMQS (101 aa)). 3 residues coordinate Fe cation: histidine 97, aspartate 99, and histidine 159. Position 169 (arginine 169) interacts with 2-oxoglutarate.

Requires Fe(2+) as cofactor. It depends on L-ascorbate as a cofactor.

This Azoarcus sp. (strain BH72) protein is PKHD-type hydroxylase azo0608.